The sequence spans 291 residues: N-acetylmannosamine kinase (291 aa).

ATP-binding positions include 5-12 (AIDIGGTK) and 132-139 (GVGGGVVC). His156, Cys166, Cys168, and Cys173 together coordinate Zn(2+).

This sequence belongs to the ROK (NagC/XylR) family. NanK subfamily. As to quaternary structure, homodimer.

The enzyme catalyses an N-acyl-D-mannosamine + ATP = an N-acyl-D-mannosamine 6-phosphate + ADP + H(+). The protein operates within amino-sugar metabolism; N-acetylneuraminate degradation; D-fructose 6-phosphate from N-acetylneuraminate: step 2/5. Its function is as follows. Catalyzes the phosphorylation of N-acetylmannosamine (ManNAc) to ManNAc-6-P. The chain is N-acetylmannosamine kinase from Salmonella gallinarum (strain 287/91 / NCTC 13346).